Reading from the N-terminus, the 165-residue chain is Choriogonadotropin subunit beta 3 (165 aa).

The signal sequence occupies residues 1-20 (MEMFQGLLLLLLLSMGGTWA). 6 disulfide bridges follow: cysteine 29-cysteine 77, cysteine 43-cysteine 92, cysteine 46-cysteine 130, cysteine 54-cysteine 108, cysteine 58-cysteine 110, and cysteine 113-cysteine 120. 2 N-linked (GlcNAc...) asparagine glycosylation sites follow: asparagine 33 and asparagine 50. Residues 131–165 (DDPRFQDSSSSKAPPPSLPSPSRLPGPSDTPILPQ) are disordered. Residues serine 141, serine 147, serine 152, and serine 158 are each glycosylated (O-linked (GalNAc...) serine). The span at 143-154 (APPPSLPSPSRL) shows a compositional bias: pro residues.

This sequence belongs to the glycoprotein hormones subunit beta family. Heterodimer of a common alpha chain identical in LH, FSH, TSH and HCG and a unique beta chain distinct in each of the hormones. High expression in the placenta throughout pregnancy.

It localises to the secreted. Functionally, beta subunit of the human chorionic gonadotropin (hCG). hCG is a complex glycoprotein composed of two glycosylated subunits alpha and beta which are non-covalently associated. The alpha subunit is identical to those in the pituitary gonadotropin hormones (LH, FSH and TSH). The beta subunits are distinct in each of the hormones and confer receptor and biological specificity. Has an essential role in pregnancy and maternal adaptation. Stimulates the ovaries to synthesize the steroids that are essential for the maintenance of pregnancy. The sequence is that of Choriogonadotropin subunit beta 3 (CGB3) from Homo sapiens (Human).